The chain runs to 250 residues: Non-specific acid phosphatase (250 aa).

The first 20 residues, 1-20 (MKSRYLVFFLPLIVAKYTSA), serve as a signal peptide directing secretion.

It belongs to the class A bacterial acid phosphatase family. In terms of assembly, homodimer.

Its subcellular location is the periplasm. It catalyses the reaction a phosphate monoester + H2O = an alcohol + phosphate. In Salmonella typhimurium (strain LT2 / SGSC1412 / ATCC 700720), this protein is Non-specific acid phosphatase (phoN).